Consider the following 545-residue polypeptide: Methionine--tRNA ligase (545 aa).

The short motif at 13–23 (PYANGPLHIGH) is the 'HIGH' region element. Zn(2+) contacts are provided by Cys-144, Cys-147, Cys-157, and Cys-160. The 'KMSKS' region motif lies at 330–334 (KISKS). Residue Lys-333 coordinates ATP.

It belongs to the class-I aminoacyl-tRNA synthetase family. MetG type 1 subfamily. Monomer. The cofactor is Zn(2+).

The protein resides in the cytoplasm. The enzyme catalyses tRNA(Met) + L-methionine + ATP = L-methionyl-tRNA(Met) + AMP + diphosphate. In terms of biological role, is required not only for elongation of protein synthesis but also for the initiation of all mRNA translation through initiator tRNA(fMet) aminoacylation. The protein is Methionine--tRNA ligase of Blochmanniella floridana.